A 285-amino-acid chain; its full sequence is Nucleotide-binding protein Gmet_1286 (285 aa).

8–15 (GLSGSGKS) contributes to the ATP binding site. 59–62 (DIRG) contributes to the GTP binding site.

It belongs to the RapZ-like family.

Functionally, displays ATPase and GTPase activities. The chain is Nucleotide-binding protein Gmet_1286 from Geobacter metallireducens (strain ATCC 53774 / DSM 7210 / GS-15).